A 499-amino-acid chain; its full sequence is MGRKKIQITRIMDERNRQVTFTKRKFGLMKKAYELSVLCDCEIALIIFNSSNKLFQYASTDMDKVLLKYTEYNEPHESRTNSDIVETLRKKGLNGCESPDADDYFEHSPLSEDRFSKLNEDSDFIFKRGPPGLPAQNFSMSVTVPVSNPNTLTYSNPGSSLVSPSLAASSSLTSTTMLSPPQTTLHRNVSPGAPQRPPSTGNAGGILGTTDLTVPNGAGTSPVGNGVWNSRASPSLLGTAGGGNGLGKVMPTKSPPPPGGGGLGMNNRKPDLRVVIPPSSKGMMPPLTEEDELELNTQRISSSQSTQPLATPVVSVTTPSFPPAGLVYSAMPTAYNTDYSLTSADLSAFEGFNSPGMLSLGQVSPWQQHHLGPATLSSLVSGSQLSQGSNLSINTNQNINIKSEPISPPRDRVNSSGFPQQQPPQQPQPPQPPQQPPQRQEMGRSPVDSLSSSSSSYDGSDREDPRSDFHSPVVLGRPPNSEDRESPSVKRMRMDTWVT.

Positions 3 to 57 (RKKIQITRIMDERNRQVTFTKRKFGLMKKAYELSVLCDCEIALIIFNSSNKLFQY) constitute an MADS-box domain. Lysine 4 is subject to N6-acetyllysine. A DNA-binding region (mef2-type) is located at residues 58-86 (ASTDMDKVLLKYTEYNEPHESRTNSDIVE). N6-acetyllysine is present on lysine 117. Residues 173-185 (TSTTMLSPPQTTL) show a composition bias toward low complexity. The disordered stretch occupies residues 173–269 (TSTTMLSPPQ…GGGLGMNNRK (97 aa)). Polar residues predominate over residues 210–233 (TDLTVPNGAGTSPVGNGVWNSRAS). An N6-acetyllysine mark is found at lysine 248, lysine 253, lysine 269, and lysine 281. The tract at residues 265–282 (MNNRKPDLRVVIPPSSKG) is required for interaction with MAPKs. The interval 288 to 295 (TEEDELEL) is beta domain. The span at 380–392 (VSGSQLSQGSNLS) shows a compositional bias: low complexity. The segment at 380 to 499 (VSGSQLSQGS…KRMRMDTWVT (120 aa)) is disordered. The residue at position 402 (lysine 402) is an N6-acetyllysine; alternate. Lysine 402 is covalently cross-linked (Glycyl lysine isopeptide (Lys-Gly) (interchain with G-Cter in SUMO); alternate). Positions 421 to 436 (QQPPQQPQPPQPPQQP) are enriched in pro residues. Residues 445-458 (SPVDSLSSSSSSYD) show a composition bias toward low complexity. 2 stretches are compositionally biased toward basic and acidic residues: residues 459 to 469 (GSDREDPRSDF) and 480 to 499 (NSED…TWVT).

As to quaternary structure, binds DNA as a homo- or heterodimer. Sumoylation on Lys-402 is enhanced by PIAS1 and represses transcriptional activity. Has no effect on nuclear location nor on DNA binding. Sumoylated by SUMO1 and, to a lesser extent by SUMO2 and SUMO3. In terms of processing, acetylation on Lys-402 activates transcriptional activity. Expressed in both embryonic and adult tissues with high expression in heart and skeletal muscle. Also expressed in gut, lung and brain of 15 dpc embryos and adults.

It is found in the nucleus. In terms of biological role, transcriptional activator which binds specifically to the MEF2 element, 5'-YTA[AT](4)TAR-3', found in numerous muscle-specific genes. Mediates cellular functions in skeletal and cardiac muscle development,. This is Myocyte-specific enhancer factor 2A (MEF2A) from Gallus gallus (Chicken).